The sequence spans 486 residues: Probable glycine dehydrogenase (decarboxylating) subunit 2 (486 aa).

Positions 1 to 26 (MLIFESSRPGRQARAQAPKPTAATND) are disordered. Residue lysine 264 is modified to N6-(pyridoxal phosphate)lysine.

The protein belongs to the GcvP family. C-terminal subunit subfamily. As to quaternary structure, the glycine cleavage system is composed of four proteins: P, T, L and H. In this organism, the P 'protein' is a heterodimer of two subunits. Pyridoxal 5'-phosphate is required as a cofactor.

It catalyses the reaction N(6)-[(R)-lipoyl]-L-lysyl-[glycine-cleavage complex H protein] + glycine + H(+) = N(6)-[(R)-S(8)-aminomethyldihydrolipoyl]-L-lysyl-[glycine-cleavage complex H protein] + CO2. The glycine cleavage system catalyzes the degradation of glycine. The P protein binds the alpha-amino group of glycine through its pyridoxal phosphate cofactor; CO(2) is released and the remaining methylamine moiety is then transferred to the lipoamide cofactor of the H protein. In Nitrosococcus oceani (strain ATCC 19707 / BCRC 17464 / JCM 30415 / NCIMB 11848 / C-107), this protein is Probable glycine dehydrogenase (decarboxylating) subunit 2.